Reading from the N-terminus, the 623-residue chain is Glutathione import ATP-binding protein GsiA (623 aa).

ABC transporter domains are found at residues 15–269 and 314–564; these read VENL…RALL and LRVR…RKLL. ATP-binding positions include 49–56 and 357–364; these read GESGSGKS.

This sequence belongs to the ABC transporter superfamily. Glutathione importer (TC 3.A.1.5.11) family. In terms of assembly, the complex is composed of two ATP-binding proteins (GsiA), two transmembrane proteins (GsiC and GsiD) and a solute-binding protein (GsiB).

It localises to the cell inner membrane. The catalysed reaction is glutathione(out) + ATP + H2O = glutathione(in) + ADP + phosphate + H(+). Its function is as follows. Part of the ABC transporter complex GsiABCD involved in glutathione import. Responsible for energy coupling to the transport system. This Escherichia coli O157:H7 protein is Glutathione import ATP-binding protein GsiA.